A 230-amino-acid chain; its full sequence is Ion-translocating oxidoreductase complex subunit E (230 aa).

The next 6 helical transmembrane spans lie at Ala18–Ala38, Leu39–Leu59, Thr63–Val83, Leu86–Val106, Ala125–Leu145, and Pro182–Val202.

It belongs to the NqrDE/RnfAE family. In terms of assembly, the complex is composed of six subunits: RnfA, RnfB, RnfC, RnfD, RnfE and RnfG.

It is found in the cell inner membrane. In terms of biological role, part of a membrane-bound complex that couples electron transfer with translocation of ions across the membrane. The polypeptide is Ion-translocating oxidoreductase complex subunit E (Citrobacter koseri (strain ATCC BAA-895 / CDC 4225-83 / SGSC4696)).